The following is a 159-amino-acid chain: Phosphopantetheine adenylyltransferase (159 aa).

Position 10 (Thr-10) interacts with substrate. ATP-binding positions include 10 to 11 (TF) and His-18. Substrate-binding residues include Lys-42, Leu-74, and Arg-88. ATP is bound by residues 89-91 (GLR), Glu-99, and 124-130 (NAFISSS).

This sequence belongs to the bacterial CoaD family. In terms of assembly, homohexamer. It depends on Mg(2+) as a cofactor.

It localises to the cytoplasm. It carries out the reaction (R)-4'-phosphopantetheine + ATP + H(+) = 3'-dephospho-CoA + diphosphate. It functions in the pathway cofactor biosynthesis; coenzyme A biosynthesis; CoA from (R)-pantothenate: step 4/5. Its function is as follows. Reversibly transfers an adenylyl group from ATP to 4'-phosphopantetheine, yielding dephospho-CoA (dPCoA) and pyrophosphate. The chain is Phosphopantetheine adenylyltransferase from Campylobacter fetus subsp. fetus (strain 82-40).